A 464-amino-acid polypeptide reads, in one-letter code: NADH-quinone oxidoreductase subunit N (464 aa).

14 helical membrane passes run 6-26 (FLYI…LVLG), 36-56 (SMSL…LIYF), 75-95 (CLAR…FFFA), 101-121 (YEFA…VEAH), 123-143 (FLSF…LVCF), 157-177 (FFVL…LVYG), 197-217 (LGAT…LGAV), 231-253 (PTVA…FAGL), 257-279 (VVIP…MVVG), 293-313 (FAYA…TGVV), 317-337 (PVLF…TVLL), 360-380 (AFTF…SGFF), 395-415 (FGVP…IPCF), and 439-459 (NVGL…VVLL).

The protein belongs to the complex I subunit 2 family. As to quaternary structure, NDH-1 is composed of 14 different subunits. Subunits NuoA, H, J, K, L, M, N constitute the membrane sector of the complex.

It is found in the cell inner membrane. The enzyme catalyses a quinone + NADH + 5 H(+)(in) = a quinol + NAD(+) + 4 H(+)(out). In terms of biological role, NDH-1 shuttles electrons from NADH, via FMN and iron-sulfur (Fe-S) centers, to quinones in the respiratory chain. The immediate electron acceptor for the enzyme in this species is believed to be ubiquinone. Couples the redox reaction to proton translocation (for every two electrons transferred, four hydrogen ions are translocated across the cytoplasmic membrane), and thus conserves the redox energy in a proton gradient. The chain is NADH-quinone oxidoreductase subunit N from Anaplasma phagocytophilum (strain HZ).